Reading from the N-terminus, the 94-residue chain is Integration host factor subunit beta (94 aa).

The protein belongs to the bacterial histone-like protein family. Heterodimer of an alpha and a beta chain.

Functionally, this protein is one of the two subunits of integration host factor, a specific DNA-binding protein that functions in genetic recombination as well as in transcriptional and translational control. The polypeptide is Integration host factor subunit beta (Salmonella arizonae (strain ATCC BAA-731 / CDC346-86 / RSK2980)).